The chain runs to 89 residues: Small ribosomal subunit protein uS15 (89 aa).

The segment covering 1–21 (MVMTAEDKAQVIGEHKKHDGD) has biased composition (basic and acidic residues). The disordered stretch occupies residues 1 to 24 (MVMTAEDKAQVIGEHKKHDGDTGS).

The protein belongs to the universal ribosomal protein uS15 family. As to quaternary structure, part of the 30S ribosomal subunit. Forms a bridge to the 50S subunit in the 70S ribosome, contacting the 23S rRNA.

Its function is as follows. One of the primary rRNA binding proteins, it binds directly to 16S rRNA where it helps nucleate assembly of the platform of the 30S subunit by binding and bridging several RNA helices of the 16S rRNA. In terms of biological role, forms an intersubunit bridge (bridge B4) with the 23S rRNA of the 50S subunit in the ribosome. In Solidesulfovibrio magneticus (strain ATCC 700980 / DSM 13731 / RS-1) (Desulfovibrio magneticus), this protein is Small ribosomal subunit protein uS15.